A 244-amino-acid polypeptide reads, in one-letter code: Venom nerve growth factor 2 (244 aa).

Residues 1–18 (MSMLCYTLIIAFLIGIWA) form the signal peptide. Positions 19-125 (APKSEDNVPL…TLNRNIRAKR (107 aa)) are excised as a propeptide. Positions 47 to 66 (GLKTSRNTDQRHPAPKKAED) are enriched in basic and acidic residues. A disordered region spans residues 47-69 (GLKTSRNTDQRHPAPKKAEDQEL). 2 disulfide bridges follow: Cys-139/Cys-205 and Cys-181/Cys-233.

Belongs to the NGF-beta family. In terms of assembly, homodimer; non-covalently linked. In terms of tissue distribution, expressed by the venom gland.

The protein resides in the secreted. Its function is as follows. Nerve growth factor is important for the development and maintenance of the sympathetic and sensory nervous systems. It stimulates division and differentiation of sympathetic and embryonic sensory neurons as well as basal forebrain cholinergic neurons in the brain. Its relevance in the snake venom is not clear. However, it has been shown to inhibit metalloproteinase-dependent proteolysis of platelet glycoprotein Ib alpha, suggesting a metalloproteinase inhibition to prevent metalloprotease autodigestion and/or protection against prey proteases. Binds a lipid between the two protein chains in the homodimer. The lipid-bound form promotes histamine relase from mouse mast cells, contrary to the lipid-free form. This is Venom nerve growth factor 2 from Notechis scutatus scutatus (Mainland tiger snake).